We begin with the raw amino-acid sequence, 578 residues long: Triokinase/FMN cyclase (578 aa).

Positions 9–336 (SVEGCAGDAL…IDAETNAKAW (328 aa)) constitute a DhaK domain. Dihydroxyacetone is bound by residues 56 to 59 (GSGH), Lys109, and Asp114. Residue His221 is the Tele-hemiaminal-histidine intermediate of the active site. The DhaL domain occupies 372–571 (KQMTLVLDRI…AAAIFRAILE (200 aa)). ATP is bound by residues 401 to 404 (DGDC), 446 to 447 (SS), Gly486, and 494 to 495 (TM). 2 positions are modified to phosphoserine: Ser511 and Ser545. 556 to 558 (DPG) lines the ATP pocket.

This sequence belongs to the dihydroxyacetone kinase (DAK) family. In terms of assembly, homodimer. Interacts with IFIH1 (via the CARD domains), the interaction is inhibited by viral infection. Mg(2+) serves as cofactor. It depends on Mn(2+) as a cofactor. Co(2+) is required as a cofactor.

It carries out the reaction dihydroxyacetone + ATP = dihydroxyacetone phosphate + ADP + H(+). The enzyme catalyses D-glyceraldehyde + ATP = D-glyceraldehyde 3-phosphate + ADP + H(+). It catalyses the reaction FAD = riboflavin cyclic-4',5'-phosphate + AMP + H(+). Each activity is inhibited by the substrate(s) of the other. Functionally, catalyzes both the phosphorylation of dihydroxyacetone and of glyceraldehyde, and the splitting of ribonucleoside diphosphate-X compounds among which FAD is the best substrate. Represses IFIH1-mediated cellular antiviral response. The sequence is that of Triokinase/FMN cyclase (Tkfc) from Rattus norvegicus (Rat).